The following is a 466-amino-acid chain: Cysteine--tRNA ligase (466 aa).

Cys28 contributes to the Zn(2+) binding site. A 'HIGH' region motif is present at residues 30–40 (PTVYNYIHIGN). Cys208, His233, and Glu237 together coordinate Zn(2+). Positions 265–269 (KMSKS) match the 'KMSKS' region motif. Position 268 (Lys268) interacts with ATP.

It belongs to the class-I aminoacyl-tRNA synthetase family. As to quaternary structure, monomer. It depends on Zn(2+) as a cofactor.

It is found in the cytoplasm. The catalysed reaction is tRNA(Cys) + L-cysteine + ATP = L-cysteinyl-tRNA(Cys) + AMP + diphosphate. This is Cysteine--tRNA ligase from Staphylococcus epidermidis (strain ATCC 35984 / DSM 28319 / BCRC 17069 / CCUG 31568 / BM 3577 / RP62A).